A 474-amino-acid chain; its full sequence is tRNA-2-methylthio-N(6)-dimethylallyladenosine synthase (474 aa).

The 118-residue stretch at 3–120 (QKLHIKTWGC…LPEMINQIRG (118 aa)) folds into the MTTase N-terminal domain. [4Fe-4S] cluster is bound by residues Cys-12, Cys-49, Cys-83, Cys-157, Cys-161, and Cys-164. Positions 143–375 (KAEGPTAFVS…QQRINNQAAK (233 aa)) constitute a Radical SAM core domain. Positions 378 to 441 (RAMLGTEQRV…TNSLRGDVIR (64 aa)) constitute a TRAM domain.

This sequence belongs to the methylthiotransferase family. MiaB subfamily. Monomer. The cofactor is [4Fe-4S] cluster.

Its subcellular location is the cytoplasm. The catalysed reaction is N(6)-dimethylallyladenosine(37) in tRNA + (sulfur carrier)-SH + AH2 + 2 S-adenosyl-L-methionine = 2-methylsulfanyl-N(6)-dimethylallyladenosine(37) in tRNA + (sulfur carrier)-H + 5'-deoxyadenosine + L-methionine + A + S-adenosyl-L-homocysteine + 2 H(+). Functionally, catalyzes the methylthiolation of N6-(dimethylallyl)adenosine (i(6)A), leading to the formation of 2-methylthio-N6-(dimethylallyl)adenosine (ms(2)i(6)A) at position 37 in tRNAs that read codons beginning with uridine. This Actinobacillus succinogenes (strain ATCC 55618 / DSM 22257 / CCUG 43843 / 130Z) protein is tRNA-2-methylthio-N(6)-dimethylallyladenosine synthase.